The primary structure comprises 147 residues: UPF0306 protein KPK_0562 (147 aa).

This sequence belongs to the UPF0306 family.

This chain is UPF0306 protein KPK_0562, found in Klebsiella pneumoniae (strain 342).